A 101-amino-acid polypeptide reads, in one-letter code: Urease subunit beta (101 aa).

It belongs to the urease beta subunit family. In terms of assembly, heterotrimer of UreA (gamma), UreB (beta) and UreC (alpha) subunits. Three heterotrimers associate to form the active enzyme.

It localises to the cytoplasm. It catalyses the reaction urea + 2 H2O + H(+) = hydrogencarbonate + 2 NH4(+). The protein operates within nitrogen metabolism; urea degradation; CO(2) and NH(3) from urea (urease route): step 1/1. The sequence is that of Urease subunit beta from Verminephrobacter eiseniae (strain EF01-2).